A 366-amino-acid polypeptide reads, in one-letter code: Alanine racemase (366 aa).

Lys35 acts as the Proton acceptor; specific for D-alanine in catalysis. Lys35 bears the N6-(pyridoxal phosphate)lysine mark. Arg130 contacts substrate. The Proton acceptor; specific for L-alanine role is filled by Tyr254. Residue Met302 coordinates substrate.

It belongs to the alanine racemase family. It depends on pyridoxal 5'-phosphate as a cofactor.

It carries out the reaction L-alanine = D-alanine. It functions in the pathway amino-acid biosynthesis; D-alanine biosynthesis; D-alanine from L-alanine: step 1/1. Catalyzes the interconversion of L-alanine and D-alanine. May also act on other amino acids. This Variovorax paradoxus (strain S110) protein is Alanine racemase (alr).